A 117-amino-acid chain; its full sequence is uncharacterized protein (117 aa).

Belongs to the mimivirus R69 family.

This is an uncharacterized protein from Acanthamoeba polyphaga mimivirus (APMV).